The primary structure comprises 128 residues: MQKIVRNRLIKIIICFCSACLGISIILYNLEKNIIFFFPPSKINEAEQGKELRVGGLVKRDSINKISANKISFVITDNIKDLEILYQGVLPALFREGQGIIAIGQLSDSKFIARQLLAKHDENYRPPS.

Residues 1–8 (MQKIVRNR) lie on the Cytoplasmic side of the membrane. Residues 9–29 (LIKIIICFCSACLGISIILYN) form a helical; Signal-anchor for type II membrane protein membrane-spanning segment. Topologically, residues 30 to 128 (LEKNIIFFFP…KHDENYRPPS (99 aa)) are periplasmic. Heme-binding residues include His120 and Tyr124.

This sequence belongs to the CcmE/CycJ family.

Its subcellular location is the cell inner membrane. In terms of biological role, heme chaperone required for the biogenesis of c-type cytochromes. Transiently binds heme delivered by CcmC and transfers the heme to apo-cytochromes in a process facilitated by CcmF and CcmH. This is Cytochrome c-type biogenesis protein CcmE from Rickettsia prowazekii (strain Madrid E).